Here is a 1221-residue protein sequence, read N- to C-terminus: DNA-directed RNA polymerase subunit beta' (1221 aa).

The Zn(2+) site is built by Cys-60, Cys-62, Cys-75, and Cys-78. Residues Asp-449, Asp-451, and Asp-453 each coordinate Mg(2+). Zn(2+) contacts are provided by Cys-821, Cys-896, Cys-903, and Cys-906.

Belongs to the RNA polymerase beta' chain family. The RNAP catalytic core consists of 2 alpha, 1 beta, 1 beta' and 1 omega subunit. When a sigma factor is associated with the core the holoenzyme is formed, which can initiate transcription. Requires Mg(2+) as cofactor. Zn(2+) serves as cofactor.

It carries out the reaction RNA(n) + a ribonucleoside 5'-triphosphate = RNA(n+1) + diphosphate. Its function is as follows. DNA-dependent RNA polymerase catalyzes the transcription of DNA into RNA using the four ribonucleoside triphosphates as substrates. This chain is DNA-directed RNA polymerase subunit beta', found in Lactobacillus delbrueckii subsp. bulgaricus (strain ATCC BAA-365 / Lb-18).